The primary structure comprises 506 residues: Galactose/methyl galactoside import ATP-binding protein MglA (506 aa).

ABC transporter domains lie at leucine 14–serine 249 and asparagine 259–leucine 506. Glycine 46–serine 53 serves as a coordination point for ATP.

Belongs to the ABC transporter superfamily. Galactose/methyl galactoside importer (TC 3.A.1.2.3) family. The complex is composed of one ATP-binding protein (MglA), two transmembrane proteins (MglC) and a solute-binding protein (MglB).

The protein resides in the cell inner membrane. The enzyme catalyses D-galactose(out) + ATP + H2O = D-galactose(in) + ADP + phosphate + H(+). It carries out the reaction methyl beta-D-galactoside(out) + ATP + H2O = methyl beta-D-galactoside(in) + ADP + phosphate + H(+). With respect to regulation, stimulated 3-fold by galactose and inhibited by vanadate, N-ethylmaleimide, and 5-methoxyindole-2-carboxylic acid. Its function is as follows. Part of the ABC transporter complex MglABC involved in galactose/methyl galactoside import. Responsible for energy coupling to the transport system. This chain is Galactose/methyl galactoside import ATP-binding protein MglA, found in Salmonella typhimurium (strain LT2 / SGSC1412 / ATCC 700720).